A 798-amino-acid chain; its full sequence is Copalyl diphosphate synthase 1, chloroplastic (798 aa).

The N-terminal 72 residues, 1 to 72 (MASLSTMHLI…SKVAGINRVA (72 aa)), are a transit peptide targeting the chloroplast. Position 251 (lysine 251) interacts with substrate. 2 residues coordinate Mg(2+): aspartate 383 and aspartate 385. The DXDD motif signature appears at 383 to 386 (DIDD). Lysine 469 lines the substrate pocket.

This sequence belongs to the terpene synthase family. Tpsc subfamily. Mg(2+) is required as a cofactor. In terms of tissue distribution, highly expressed in roots, and, at low levels, in stems and leaves.

It localises to the plastid. The protein localises to the chloroplast. It carries out the reaction (2E,6E,10E)-geranylgeranyl diphosphate = (+)-copalyl diphosphate. The protein operates within secondary metabolite biosynthesis; terpenoid biosynthesis. Its function is as follows. Involved in the biosynthesis of ent-kaurene diterpenoids natural products such as oridonin, miltiradiene, eriocalyxin B and nezukol, known to exhibit antitumor, anti-inflammatory and antibacterial activities. Catalyzes the conversion of (2E,6E,10E)-geranylgeranyl diphosphate (GGPP) to (+)-copalyl diphosphate ((+)-CPP). This chain is Copalyl diphosphate synthase 1, chloroplastic, found in Isodon rubescens (Rabdosia rubescens).